The primary structure comprises 167 residues: General odorant-binding protein 1 (167 aa).

An N-terminal signal peptide occupies residues 1–22 (MAHTLQTVVLLLGTSILHPILA). Intrachain disulfides connect cysteine 41–cysteine 76, cysteine 72–cysteine 130, and cysteine 119–cysteine 139.

The protein belongs to the PBP/GOBP family. Antenna.

Present in the aqueous fluid surrounding olfactory sensory dendrites and are thought to aid in the capture and transport of hydrophobic odorants into and through this fluid. The chain is General odorant-binding protein 1 from Antheraea pernyi (Chinese oak silk moth).